Reading from the N-terminus, the 224-residue chain is Deoxyribose-phosphate aldolase (224 aa).

The active-site Proton donor/acceptor is the aspartate 91. Residue lysine 152 is the Schiff-base intermediate with acetaldehyde of the active site. The active-site Proton donor/acceptor is the lysine 181.

This sequence belongs to the DeoC/FbaB aldolase family. DeoC type 1 subfamily.

The protein resides in the cytoplasm. It carries out the reaction 2-deoxy-D-ribose 5-phosphate = D-glyceraldehyde 3-phosphate + acetaldehyde. The protein operates within carbohydrate degradation; 2-deoxy-D-ribose 1-phosphate degradation; D-glyceraldehyde 3-phosphate and acetaldehyde from 2-deoxy-alpha-D-ribose 1-phosphate: step 2/2. In terms of biological role, catalyzes a reversible aldol reaction between acetaldehyde and D-glyceraldehyde 3-phosphate to generate 2-deoxy-D-ribose 5-phosphate. The protein is Deoxyribose-phosphate aldolase of Mycoplasma pneumoniae (strain ATCC 29342 / M129 / Subtype 1) (Mycoplasmoides pneumoniae).